A 1770-amino-acid chain; its full sequence is Vitellogenin (1770 aa).

The signal sequence occupies residues 1–16; it reads MLLLLTLLLFAGTVAA. The 788-residue stretch at 22–809 folds into the Vitellogenin domain; it reads WQVGNEYTYL…SEDSVIPRIL (788 aa). Cys-178 and Cys-222 are disulfide-bonded. The N-linked (GlcNAc...) asparagine glycan is linked to Asn-296. The disordered stretch occupies residues 373-394; it reads SSSSSISSSEENDFWQPKPTLE. Asn-1067 is a glycosylation site (N-linked (GlcNAc...) asparagine). Residues 1442-1635 form the VWFD domain; that stretch reads TSCMLDKTRA…SYALISNQCE (194 aa). 2 cysteine pairs are disulfide-bonded: Cys-1444–Cys-1598 and Cys-1466–Cys-1634.

In terms of tissue distribution, accumulates in the hemolymph. Represents up to 70% of the queen's hemolymph proteins. During the first week of the worker adult life, when it becomes a nurse bee and performs brood-rearing tasks, the vitellogenin titer increases and may account for up to 40% of the total hemolymph proteins.

The protein localises to the secreted. In terms of biological role, precursor of the egg-yolk proteins that are sources of nutrients during embryonic development. Involved in the differentiation of honeybee larvae into queens. The sequence is that of Vitellogenin (Vg) from Apis mellifera (Honeybee).